We begin with the raw amino-acid sequence, 542 residues long: uncharacterized protein (542 aa).

A glycan (N-linked (GlcNAc...) asparagine) is linked at asparagine 6. 8 helical membrane passes run 61 to 81, 95 to 115, 139 to 159, 188 to 208, 217 to 237, 255 to 275, 298 to 318, and 348 to 368; these read FSTWATFSFAFSISGLFATVV, SAVWCWLIAGAGCMCIALSVA, SMPVVAWVVGWLNLLGQAAGV, HIVGVMAAVIVFHGLVNSLST, FYATFHLIVLVVCMICLLAKC, GWHPIGFSFLFGFLSVAWCMT, IALALSITYVLGWVFNIVLAF, and GSMAFTILSFIIINFTGITAM. Asparagine 394 carries an N-linked (GlcNAc...) asparagine glycan. The next 4 helical transmembrane spans lie at 402–422, 424–444, 469–489, and 500–520; these read IAVWLNVVFCIALNLIGLGSI, AIEAIFSVCAIALDWSYVIPI, FVNAYAVCWTAFVSVIFLMPT, and YAVVVLAGVLLFSLVYWWSGA.

This sequence belongs to the amino acid-polyamine-organocation (APC) superfamily.

It is found in the golgi apparatus. The protein localises to the membrane. This is an uncharacterized protein from Schizosaccharomyces pombe (strain 972 / ATCC 24843) (Fission yeast).